Consider the following 975-residue polypeptide: MTIQVLFATEYDSANIVISLLCGVEVDHDLYPILYKRINYNNGASNNDGSRSGAINFDDRVNDEDSRLNAPVDDTIEFCLQTQSCEDSIRIRPVFYCHAHALNFETRYRTHEVLGSATLLQCLDESRTLTMYRRILSEIITEPSSASEKRNPAPTNLRHLVYFHRDVLVKYLTENFIMPTSPAWFISVFGSYEASLVLTMHYYLLERQYSTVQTTQHYAKCFTGDMGKPLVSCYSMKDFMIMIQSSAFLGKTAKFTHYCKLKNDRDLQELMAIDASINAFRQNVCLTEAEHVHFMYLAFGTALAKTKFLDYTLKTSLLSNNDDQTNNCNDYIVDNCAVDNHCQNDIDEIIIPRSSTNRTFAISEVSYDRSNSTSSSGVYSMDSCDESRGSEDSAMCSLYESRYLSHNLKKELLNIMELYFTPTSYLNIYVKVHKHESKSPLFEGYSIDTCSEKGTVFSGTSTSMADRLRKGNKMFEGLFEETDSEGVSSVLNIIASNRHAILPRCEDDDSCGKSTSGMPNRICKREIVFPGLTRPAPMYRTDGFNNMQICRYFSVVSKENWFSNSNLTDVLNMVPDEYVSDERLTESVWVPDVKVSSPRLSEQLYRSRHEMFNDRLPVYNFVGDVDLKVTGPVSKDWMFSFCRTLRRIILETFEHLFEKIDHGEHPVYFFKSGCEPENGSFCACSEKIGLRVITPFPRNTCILGGKTMKHLCEIINHILFLDKEMFSLVNVTVVDKNCFDYGIYSHGKSVRLPMMSKVDENLGFLQNRLLPLFIVPDSYRHGGRHKVFVRDQLNISNWLHHNASGTAYDPCKTISYVLSIDDVGRAQDVSFIDHKLNKLLKKEYVHIDTIIELFKSKYDISETRYFIEKIVWPQFLRTIKTNYHSAAGNQFNNVCFDDTSWPCVQLFKIHQGTRRNFSCIQHDHRDGRENVQFFLDFRPESATTIWTTLWSRCFSRKCKSNAKNVHVSHKLTIQQ.

Residues 919–958 (CIQHDHRDGRENVQFFLDFRPESATTIWTTLWSRCFSRKC) form a CHC2-type zinc finger.

The protein belongs to the herpesviridae DNA primase family. In terms of assembly, associates with the helicase and the primase-associated factor to form the helicase-primase factor.

It localises to the host nucleus. Essential component of the helicase/primase complex. Unwinds the DNA at the replication forks and generates single-stranded DNA for both leading and lagging strand synthesis. The primase initiates primer synthesis and thereby produces large amount of short RNA primers on the lagging strand that the polymerase elongates using dNTPs. This Elephas maximus (Indian elephant) protein is DNA primase.